We begin with the raw amino-acid sequence, 144 residues long: Large ribosomal subunit protein uL15 (144 aa).

A disordered region spans residues 1 to 57 (MKLNDLSPAPGSRREKHRPGRGIGSGLGKTGGRGHKGQTSRSGGSIAPGFEGGQQPL). Gly residues predominate over residues 21-31 (RGIGSGLGKTG).

The protein belongs to the universal ribosomal protein uL15 family. In terms of assembly, part of the 50S ribosomal subunit.

Functionally, binds to the 23S rRNA. The chain is Large ribosomal subunit protein uL15 from Pseudomonas putida (strain ATCC 700007 / DSM 6899 / JCM 31910 / BCRC 17059 / LMG 24140 / F1).